A 257-amino-acid polypeptide reads, in one-letter code: Hydroxyacylglutathione hydrolase (257 aa).

Positions 54, 56, 58, 59, 109, 129, and 167 each coordinate Zn(2+).

Belongs to the metallo-beta-lactamase superfamily. Glyoxalase II family. In terms of assembly, monomer. It depends on Zn(2+) as a cofactor.

The enzyme catalyses an S-(2-hydroxyacyl)glutathione + H2O = a 2-hydroxy carboxylate + glutathione + H(+). Its pathway is secondary metabolite metabolism; methylglyoxal degradation; (R)-lactate from methylglyoxal: step 2/2. Thiolesterase that catalyzes the hydrolysis of S-D-lactoyl-glutathione to form glutathione and D-lactic acid. This is Hydroxyacylglutathione hydrolase from Marinomonas sp. (strain MWYL1).